The sequence spans 281 residues: Probable feruloyl esterase A (281 aa).

The signal sequence occupies residues 1-21 (MKQFSAKYALILLATAGQALA). Cystine bridges form between cysteine 50/cysteine 279, cysteine 112/cysteine 115, and cysteine 248/cysteine 255. Aspartate 98 contributes to the substrate binding site. N-linked (GlcNAc...) asparagine glycosylation occurs at asparagine 100. Tyrosine 101 contacts substrate. Serine 154 functions as the Nucleophile in the catalytic mechanism. Aspartate 215 serves as the catalytic Charge relay system. Histidine 268 is a binding site for substrate. Histidine 268 serves as the catalytic Charge relay system.

The protein belongs to the AB hydrolase superfamily. FaeA family.

It is found in the secreted. It catalyses the reaction feruloyl-polysaccharide + H2O = ferulate + polysaccharide.. Its function is as follows. Involved in degradation of plant cell walls. Hydrolyzes the feruloyl-arabinose ester bond in arabinoxylans, and the feruloyl-galactose ester bond in pectin. The sequence is that of Probable feruloyl esterase A (faeA) from Aspergillus niger (strain ATCC MYA-4892 / CBS 513.88 / FGSC A1513).